Here is a 286-residue protein sequence, read N- to C-terminus: Phosducin-like protein 2 (286 aa).

Residues Ser-35 and Ser-62 each carry the phosphoserine modification. The thioredoxin fold stretch occupies residues 96–286 (FGEVFHINKP…INDDDDGFFD (191 aa)).

It belongs to the phosducin family. Interacts with the G protein beta-gamma subunit complex (STE4-STE18 complex). Interacts with CCT2; this interaction leads to inhibition of CCT complex mediated actin folding.

It is found in the cytoplasm. Functionally, essential for cell growth. Inhibits early G-protein signaling events following pheromone stimulation. Inhibits the folding activity of the chaperonin-containing T-complex (CCT) CCT2 which leads to inhibition of cytoskeletal actin folding. Plays a role in cell cycle progression in G1/S phase. The polypeptide is Phosducin-like protein 2 (Saccharomyces cerevisiae (strain ATCC 204508 / S288c) (Baker's yeast)).